A 380-amino-acid polypeptide reads, in one-letter code: 3-isopropylmalate dehydrogenase (380 aa).

Position 79–90 (glycine 79–glutamate 90) interacts with NAD(+). Substrate-binding residues include arginine 97, arginine 107, arginine 136, and aspartate 229. Positions 229, 254, and 258 each coordinate Mg(2+). Glycine 294–asparagine 306 is a binding site for NAD(+).

This sequence belongs to the isocitrate and isopropylmalate dehydrogenases family. As to quaternary structure, homodimer. It depends on Mg(2+) as a cofactor. Mn(2+) serves as cofactor.

The protein localises to the cytoplasm. The catalysed reaction is (2R,3S)-3-isopropylmalate + NAD(+) = 4-methyl-2-oxopentanoate + CO2 + NADH. It functions in the pathway amino-acid biosynthesis; L-leucine biosynthesis; L-leucine from 3-methyl-2-oxobutanoate: step 3/4. Catalyzes the oxidation of 3-carboxy-2-hydroxy-4-methylpentanoate (3-isopropylmalate) to 3-carboxy-4-methyl-2-oxopentanoate. The product decarboxylates to 4-methyl-2 oxopentanoate. The chain is 3-isopropylmalate dehydrogenase (LEU2) from Hapsidospora chrysogena (Acremonium chrysogenum).